We begin with the raw amino-acid sequence, 590 residues long: Aspartate--tRNA(Asp/Asn) ligase (590 aa).

An L-aspartate-binding site is contributed by Glu175. Residues Gln199–Lys202 are aspartate. L-aspartate is bound by residues Arg221 and His450. Residue Arg221 to Glu223 coordinates ATP. Glu484 serves as a coordination point for ATP. L-aspartate is bound at residue Arg491. Residue Gly536 to Arg539 coordinates ATP.

Belongs to the class-II aminoacyl-tRNA synthetase family. Type 1 subfamily. As to quaternary structure, homodimer.

The protein localises to the cytoplasm. It catalyses the reaction tRNA(Asx) + L-aspartate + ATP = L-aspartyl-tRNA(Asx) + AMP + diphosphate. Aspartyl-tRNA synthetase with relaxed tRNA specificity since it is able to aspartylate not only its cognate tRNA(Asp) but also tRNA(Asn). Reaction proceeds in two steps: L-aspartate is first activated by ATP to form Asp-AMP and then transferred to the acceptor end of tRNA(Asp/Asn). This chain is Aspartate--tRNA(Asp/Asn) ligase, found in Bradyrhizobium sp. (strain BTAi1 / ATCC BAA-1182).